A 1094-amino-acid polypeptide reads, in one-letter code: Probable arabinosyltransferase C (1094 aa).

Transmembrane regions (helical) follow at residues 28–50 (IARY…TPLL), 232–251 (AAMI…LHIL), 264–286 (PARW…WWHF), 341–360 (SIWM…WVIS), 373–392 (TSRA…WLPL), 431–453 (IGAL…LVAI), 466–488 (RFGV…IPIF), 530–552 (SIAR…AMSL), 565–582 (SRRI…MMFT), 586–608 (WTHH…AVAV), 620–642 (TVFA…GWWY), 657–679 (WRWS…AAWF), and 700–722 (LAGI…EVVS). A compositionally biased stretch (low complexity) spans 817-831 (GSEPGTEGGTTAAPG). The segment at 817–836 (GSEPGTEGGTTAAPGINGSR) is disordered.

This sequence belongs to the emb family.

The protein resides in the cell membrane. In terms of biological role, arabinosyl transferase responsible for the polymerization of arabinose into the arabinan of arabinogalactan. This chain is Probable arabinosyltransferase C (embC), found in Mycobacterium tuberculosis (strain CDC 1551 / Oshkosh).